Consider the following 160-residue polypeptide: UPF0262 protein ELI_10965 (160 aa).

The protein belongs to the UPF0262 family.

The polypeptide is UPF0262 protein ELI_10965 (Erythrobacter litoralis (strain HTCC2594)).